A 78-amino-acid polypeptide reads, in one-letter code: Major outer membrane lipoprotein Lpp (78 aa).

The first 20 residues, 1-20 (MNRTKLVLGAVILGSTLLAG), serve as a signal peptide directing secretion. The N-palmitoyl cysteine moiety is linked to residue Cys-21. Residue Cys-21 is the site of S-diacylglycerol cysteine attachment. Repeats lie at residues 24–34 (NAKIDQLSSDV) and 38–48 (NAKVDQLSNDV). The stretch at 27-75 (IDQLSSDVQTLNAKVDQLSNDVNAIRSDVQAAKDDAARANQRLDNQVRT) forms a coiled coil. An N6-murein peptidoglycan lysine modification is found at Lys-78.

It belongs to the Lpp family. Homotrimer.

It localises to the cell outer membrane. Its subcellular location is the secreted. The protein resides in the cell wall. In terms of biological role, a highly abundant outer membrane lipoprotein that controls the distance between the inner and outer membranes. The only protein known to be covalently linked to the peptidoglycan network (PGN). Also non-covalently binds the PGN. The link between the cell outer membrane and PGN contributes to maintenance of the structural and functional integrity of the cell envelope, and maintains the correct distance between the PGN and the outer membrane. This Pectobacterium atrosepticum (strain SCRI 1043 / ATCC BAA-672) (Erwinia carotovora subsp. atroseptica) protein is Major outer membrane lipoprotein Lpp.